Reading from the N-terminus, the 687-residue chain is DNA-directed RNA polymerase subunit beta' (687 aa).

Zn(2+) contacts are provided by cysteine 69, cysteine 71, cysteine 87, and cysteine 90. Aspartate 492, aspartate 494, and aspartate 496 together coordinate Mg(2+).

This sequence belongs to the RNA polymerase beta' chain family. RpoC1 subfamily. In plastids the minimal PEP RNA polymerase catalytic core is composed of four subunits: alpha, beta, beta', and beta''. When a (nuclear-encoded) sigma factor is associated with the core the holoenzyme is formed, which can initiate transcription. Mg(2+) serves as cofactor. Zn(2+) is required as a cofactor.

Its subcellular location is the plastid. It is found in the chloroplast. It catalyses the reaction RNA(n) + a ribonucleoside 5'-triphosphate = RNA(n+1) + diphosphate. In terms of biological role, DNA-dependent RNA polymerase catalyzes the transcription of DNA into RNA using the four ribonucleoside triphosphates as substrates. The polypeptide is DNA-directed RNA polymerase subunit beta' (Silene latifolia (White campion)).